Reading from the N-terminus, the 341-residue chain is HTH-type transcriptional repressor PurR (341 aa).

In terms of domain architecture, HTH lacI-type spans 2 to 56 (ATIKDVAKRANVSTTTVSHVINKTRFVAEETRNAVWAAIKELHYSPSAVARSLKV). Positions 4–23 (IKDVAKRANVSTTTVSHVIN) form a DNA-binding region, H-T-H motif. Residues 48-56 (SAVARSLKV) mediate DNA binding. 5 residues coordinate hypoxanthine: Tyr73, Arg190, Thr192, Phe221, and Asp275.

As to quaternary structure, homodimer.

Its pathway is purine metabolism; purine nucleotide biosynthesis [regulation]. In terms of biological role, is the main repressor of the genes involved in the de novo synthesis of purine nucleotides, regulating purB, purC, purEK, purF, purHD, purL, purMN and guaBA expression. PurR is allosterically activated to bind its cognate DNA by binding the purine corepressors, hypoxanthine or guanine, thereby effecting transcription repression. In Klebsiella pneumoniae (strain 342), this protein is HTH-type transcriptional repressor PurR.